We begin with the raw amino-acid sequence, 502 residues long: Acetylcholine receptor subunit alpha-type unc-63 (502 aa).

The signal sequence occupies residues 1–23 (MGPNDHGFAYILIFLLLSPPTHA). Over 24–263 (NRDANRLFED…HLRRKTLFYT (240 aa)) the chain is Extracellular. Asn-136 carries an N-linked (GlcNAc...) asparagine glycan. Cysteines 151 and 165 form a disulfide. The next 3 helical transmembrane spans lie at 264–284 (VNLIFPSVGISFLTALVFYLP), 293–313 (LCISILISLTVFFLLLVEIIP), and 326–346 (LLFTMVLVTLSVVVTVVTLNV). At 347-470 (HYRSPTTHTM…WKYISVVMDR (124 aa)) the chain is on the cytoplasmic side. A helical membrane pass occupies residues 471-491 (IFLITFTFACAFGTVVIIARA).

This sequence belongs to the ligand-gated ion channel (TC 1.A.9) family. Acetylcholine receptor (TC 1.A.9.1) subfamily. Component of nicotinic acetylcholine receptor. In muscles, composed of 2 non-alpha subunits lev-1 and unc-29, and 3 alpha subunits unc-38, unc-63 and lev-8. In cholinergic motoneurons, composed of 2 non-alpha subunits acr-2 and acr-3, and 3 alpha subunits unc-38, unc-63 and acr-12. Interacts with lev-10. Expressed in body wall muscles, in vulval muscles and in neurons.

The protein resides in the postsynaptic cell membrane. It is found in the cell membrane. In terms of biological role, alpha subunit of nicotinic acetylcholine receptor (nAChR). Probably acts in cholinergic motoneurons to regulate presynaptic neurotransmitter release, thereby ensuring normal level of excitation of cholinergic motoneurons during locomotion. Involved in nAChR sensitivity to nicotine and levamisole. This Caenorhabditis elegans protein is Acetylcholine receptor subunit alpha-type unc-63 (unc-63).